Reading from the N-terminus, the 236-residue chain is Phosphoribosylaminoimidazole-succinocarboxamide synthase (236 aa).

This sequence belongs to the SAICAR synthetase family.

It carries out the reaction 5-amino-1-(5-phospho-D-ribosyl)imidazole-4-carboxylate + L-aspartate + ATP = (2S)-2-[5-amino-1-(5-phospho-beta-D-ribosyl)imidazole-4-carboxamido]succinate + ADP + phosphate + 2 H(+). It functions in the pathway purine metabolism; IMP biosynthesis via de novo pathway; 5-amino-1-(5-phospho-D-ribosyl)imidazole-4-carboxamide from 5-amino-1-(5-phospho-D-ribosyl)imidazole-4-carboxylate: step 1/2. This is Phosphoribosylaminoimidazole-succinocarboxamide synthase (purC) from Lactococcus lactis subsp. cremoris (Streptococcus cremoris).